A 275-amino-acid chain; its full sequence is Large ribosomal subunit protein uL2 (275 aa).

Disordered regions lie at residues Leu-24–Gln-54 and Val-223–Arg-275. 2 stretches are compositionally biased toward basic and acidic residues: residues Tyr-25–Thr-38 and Asp-229–Glu-241.

Belongs to the universal ribosomal protein uL2 family. Part of the 50S ribosomal subunit. Forms a bridge to the 30S subunit in the 70S ribosome.

Functionally, one of the primary rRNA binding proteins. Required for association of the 30S and 50S subunits to form the 70S ribosome, for tRNA binding and peptide bond formation. It has been suggested to have peptidyltransferase activity; this is somewhat controversial. Makes several contacts with the 16S rRNA in the 70S ribosome. The chain is Large ribosomal subunit protein uL2 from Azoarcus sp. (strain BH72).